The primary structure comprises 60 residues: Mastoparan-VT1 (60 aa).

The first 25 residues, 1–25 (MKNTILILFTAFIALLGFFGMSAEA), serve as a signal peptide directing secretion. A propeptide spanning residues 26–45 (LADLKADPLAGPNPDADPEA) is cleaved from the precursor. AXPX repeat units follow at residues 31–34 (ADPL), 35–38 (AGPN), and 41–44 (ADPE). Leu-59 is modified (leucine amide).

It belongs to the MCD family. Mastoparan subfamily. In terms of tissue distribution, expressed by the venom gland.

The protein resides in the secreted. Antimicrobial peptide with activities against Gram-negative and Gram-positive bacteria and the fungi C.albicans and C.parapsilosis. Exhibits little hemolytic activity against washed human erythrocytes. Also acts as a mast cell degranulating peptide. Its mast cell degranulation activity may be related to the activation of G-protein coupled receptors in mast cells as well as interaction with other proteins located in cell endosomal membranes in the mast cells. Its function is as follows. Antimicrobial peptide with activities against Gram-negative and Gram-positive bacteria and the fungi C.albicans and C.parapsilosis. Exhibits little hemolytic activity against washed human erythrocytes. Also acts as a mast cell degranulating peptide. This chain is Mastoparan-VT1, found in Vespa tropica (Greater banded hornet).